The primary structure comprises 212 residues: MTDLSDIRREYTKGGLRRADLPQNPMQLFELWMTQARDAELSDPTAMCVATVDEHGQPYQRIVLLKRFDDTGFVFFTNLGSRKAQQIATNNKVSLHFPWHPIERQVSILGEAQPLSTAEVLKYFMTRPKDSQIAAWVSQQSSKLSARQVLEGKFFEMKAKFAKGDVPLPSFWGGYLVKPSSIEFWQGGEHRLHDRFLYTRQADEWVIDRLAP.

Substrate contacts are provided by residues 8-11 and Lys66; that span reads RREY. FMN contacts are provided by residues 61-66, 76-77, Arg82, Lys83, and Gln105; these read RIVLLK and FT. 3 residues coordinate substrate: Tyr123, Arg127, and Ser131. FMN is bound by residues 140-141 and Trp185; that span reads QS. Residue 191-193 participates in substrate binding; the sequence is RLH. Residue Arg195 participates in FMN binding.

Belongs to the pyridoxamine 5'-phosphate oxidase family. As to quaternary structure, homodimer. Requires FMN as cofactor.

It carries out the reaction pyridoxamine 5'-phosphate + O2 + H2O = pyridoxal 5'-phosphate + H2O2 + NH4(+). The enzyme catalyses pyridoxine 5'-phosphate + O2 = pyridoxal 5'-phosphate + H2O2. It functions in the pathway cofactor metabolism; pyridoxal 5'-phosphate salvage; pyridoxal 5'-phosphate from pyridoxamine 5'-phosphate: step 1/1. It participates in cofactor metabolism; pyridoxal 5'-phosphate salvage; pyridoxal 5'-phosphate from pyridoxine 5'-phosphate: step 1/1. Its function is as follows. Catalyzes the oxidation of either pyridoxine 5'-phosphate (PNP) or pyridoxamine 5'-phosphate (PMP) into pyridoxal 5'-phosphate (PLP). The polypeptide is Pyridoxine/pyridoxamine 5'-phosphate oxidase (Shewanella sp. (strain ANA-3)).